The following is a 232-amino-acid chain: MQRTVNIQAVESKLKFTFSQPRLLVTALTHPSYRNEFPSDGEDSERLEFLGDAVLGLVVTEHLFLLFPSLNEGLLSTTRSALVNAEACFNYTQKLSLGEHLLIGRGEKMQSHRGKISAYANLFEAILGAVYLDGGLAPARQIIVPLLPNKEAILPLMLVNPKNRLQQFTQQTLKVLPTYIALPWSSEDGTPGYHVQVFVNEKLWGEGFAGSKKEAEKLAAKQALSTHDDNKN.

Residues 7-135 (IQAVESKLKF…ILGAVYLDGG (129 aa)) form the RNase III domain. Residue Glu-48 coordinates Mg(2+). The active site involves Asp-52. Mg(2+)-binding residues include Asn-121 and Glu-124. Residue Glu-124 is part of the active site. Residues 160 to 229 (NPKNRLQQFT…AKQALSTHDD (70 aa)) form the DRBM domain.

It belongs to the ribonuclease III family. Homodimer. Mg(2+) serves as cofactor.

It localises to the cytoplasm. The catalysed reaction is Endonucleolytic cleavage to 5'-phosphomonoester.. Its function is as follows. Digests double-stranded RNA. Involved in the processing of primary rRNA transcript to yield the immediate precursors to the large and small rRNAs (23S and 16S). Processes some mRNAs, and tRNAs when they are encoded in the rRNA operon. Processes pre-crRNA and tracrRNA of type II CRISPR loci if present in the organism. In Chlamydia muridarum (strain MoPn / Nigg), this protein is Ribonuclease 3.